Here is a 214-residue protein sequence, read N- to C-terminus: Probable transaldolase (214 aa).

The Schiff-base intermediate with substrate role is filled by K83.

The protein belongs to the transaldolase family. Type 3B subfamily.

It is found in the cytoplasm. The enzyme catalyses D-sedoheptulose 7-phosphate + D-glyceraldehyde 3-phosphate = D-erythrose 4-phosphate + beta-D-fructose 6-phosphate. It functions in the pathway carbohydrate degradation; pentose phosphate pathway; D-glyceraldehyde 3-phosphate and beta-D-fructose 6-phosphate from D-ribose 5-phosphate and D-xylulose 5-phosphate (non-oxidative stage): step 2/3. Transaldolase is important for the balance of metabolites in the pentose-phosphate pathway. The protein is Probable transaldolase of Geobacter metallireducens (strain ATCC 53774 / DSM 7210 / GS-15).